Here is a 384-residue protein sequence, read N- to C-terminus: L-aspartate decarboxylase (384 aa).

Lysine 231 is modified (N6-(pyridoxal phosphate)lysine).

The protein belongs to the group II decarboxylase family. MfnA subfamily. In terms of assembly, homodimer. Can also form homohexamers. It depends on pyridoxal 5'-phosphate as a cofactor.

It carries out the reaction L-aspartate + H(+) = beta-alanine + CO2. It functions in the pathway cofactor biosynthesis; coenzyme A biosynthesis. Inhibited by hydroxylamine. Functionally, catalyzes the decarboxylation of L-aspartate to produce beta-alanine. In vitro, can also catalyze the decarboxylation of L-glutamate to produce 4-aminobutanoate, but this activity does not seem necessary in vivo. Shows much higher activity with L-aspartate than with L-glutamate. Does not decarboxylate L-tyrosine. In Thermococcus kodakarensis (strain ATCC BAA-918 / JCM 12380 / KOD1) (Pyrococcus kodakaraensis (strain KOD1)), this protein is L-aspartate decarboxylase.